The primary structure comprises 228 residues: L-ribulose-5-phosphate 4-epimerase UlaF (228 aa).

Substrate is bound by residues 26-27 (GN), 43-44 (SG), and 72-73 (SS). Zn(2+) is bound by residues Asp-74, His-93, and His-95. The active-site Proton donor/acceptor is the Asp-118. His-167 contributes to the Zn(2+) binding site. The active-site Proton donor/acceptor is the Tyr-225.

The protein belongs to the aldolase class II family. AraD/FucA subfamily. Zn(2+) serves as cofactor.

The enzyme catalyses L-ribulose 5-phosphate = D-xylulose 5-phosphate. The protein operates within cofactor degradation; L-ascorbate degradation; D-xylulose 5-phosphate from L-ascorbate: step 4/4. Its function is as follows. Catalyzes the isomerization of L-ribulose 5-phosphate to D-xylulose 5-phosphate. Is involved in the anaerobic L-ascorbate utilization. In Escherichia fergusonii (strain ATCC 35469 / DSM 13698 / CCUG 18766 / IAM 14443 / JCM 21226 / LMG 7866 / NBRC 102419 / NCTC 12128 / CDC 0568-73), this protein is L-ribulose-5-phosphate 4-epimerase UlaF.